Consider the following 481-residue polypeptide: NADH-quinone oxidoreductase subunit N (481 aa).

Transmembrane regions (helical) follow at residues 11-31, 38-58, 74-94, 103-123, 128-148, 163-183, 208-228, 241-261, 272-292, 300-322, 332-352, 368-388, 404-424, and 450-470; these read ALPE…DLWA, WTHY…LAVW, GMSR…FVYA, IFKG…SVMV, FLTA…LIAL, FVLG…VYGA, LGLV…PFHM, VTAL…FRIL, WSLM…LAAI, MLAY…GAVG, TYAL…DGDN, VWLA…PPLM, GYVW…FYYL, and SLLS…QTVI.

This sequence belongs to the complex I subunit 2 family. NDH-1 is composed of 14 different subunits. Subunits NuoA, H, J, K, L, M, N constitute the membrane sector of the complex.

It is found in the cell inner membrane. It catalyses the reaction a quinone + NADH + 5 H(+)(in) = a quinol + NAD(+) + 4 H(+)(out). Functionally, NDH-1 shuttles electrons from NADH, via FMN and iron-sulfur (Fe-S) centers, to quinones in the respiratory chain. The immediate electron acceptor for the enzyme in this species is believed to be ubiquinone. Couples the redox reaction to proton translocation (for every two electrons transferred, four hydrogen ions are translocated across the cytoplasmic membrane), and thus conserves the redox energy in a proton gradient. The polypeptide is NADH-quinone oxidoreductase subunit N (Neisseria gonorrhoeae (strain ATCC 700825 / FA 1090)).